Reading from the N-terminus, the 174-residue chain is MASFFLYSLGLVFLSALTLVPLGLADKSPSHNMPPNPIYTTPIHKNPTNTPVYNPPIYKPPPTYKPPIKKQPINKSPNKKPLLLKPPLPKPPHKEPPSRKRPINTPPDKKPPLLKPPFPKPPQKKPPSRKRPINTPPNKKPPLPKPPVNKPPHKKPSNKRPPPYGNQPPPSIHF.

A signal peptide spans 1-25 (MASFFLYSLGLVFLSALTLVPLGLA). The interval 28–174 (SPSHNMPPNP…GNQPPPSIHF (147 aa)) is disordered. Positions 53–65 (YNPPIYKPPPTYK) are enriched in pro residues. Positions 70-83 (KQPINKSPNKKPLL) are enriched in low complexity. The span at 122–132 (PQKKPPSRKRP) shows a compositional bias: basic residues. 2 stretches are compositionally biased toward pro residues: residues 134-150 (NTPP…PVNK) and 159-174 (KRPP…SIHF).

It belongs to the plant proline-rich protein superfamily. In terms of tissue distribution, expressed in cotyledons, leaf vasculature, stomatal guard cells and trichomes. In the embryo, expressed in embryo suspensors, the epidermis and underlying tissues of the cotyledons, hypocotyls, and radicle in maturing embryos, and the outer cell layer of the endosperm.

The protein resides in the secreted. The protein localises to the cell wall. In terms of biological role, involved in the infection process during the plant-rhizobium interaction. Involved in actinorhizal root nodulation. Involved in symbiotic association with the nitrogen-fixing actinomycete Frankia spp. The polypeptide is Early nodulin-11 (Medicago truncatula (Barrel medic)).